The following is a 213-amino-acid chain: Orotate phosphoribosyltransferase (213 aa).

Lysine 26 serves as a coordination point for 5-phospho-alpha-D-ribose 1-diphosphate. 34–35 (FF) lines the orotate pocket. 5-phospho-alpha-D-ribose 1-diphosphate contacts are provided by residues 72 to 73 (YK), arginine 98, lysine 99, lysine 102, histidine 104, and 123 to 131 (DDVISAGTS). The orotate site is built by serine 127 and arginine 155.

The protein belongs to the purine/pyrimidine phosphoribosyltransferase family. PyrE subfamily. Homodimer. Requires Mg(2+) as cofactor.

It carries out the reaction orotidine 5'-phosphate + diphosphate = orotate + 5-phospho-alpha-D-ribose 1-diphosphate. It functions in the pathway pyrimidine metabolism; UMP biosynthesis via de novo pathway; UMP from orotate: step 1/2. Functionally, catalyzes the transfer of a ribosyl phosphate group from 5-phosphoribose 1-diphosphate to orotate, leading to the formation of orotidine monophosphate (OMP). This Laribacter hongkongensis (strain HLHK9) protein is Orotate phosphoribosyltransferase.